Reading from the N-terminus, the 150-residue chain is Ribonuclease K6 (150 aa).

The N-terminal stretch at 1–23 (MVLCFPLLLLLLVLWGPVCLLHA) is a signal peptide. The Proton acceptor role is filled by H38. 4 disulfide bridges follow: C46–C104, C60–C114, C78–C129, and C85–C92. N55 carries N-linked (GlcNAc...) asparagine glycosylation. Residues 61–65 (KHQNT) and K86 contribute to the substrate site. N-linked (GlcNAc...) asparagine glycosylation is present at N100. R105 is a substrate binding site. The Proton donor role is filled by H145.

This sequence belongs to the pancreatic ribonuclease family. As to quaternary structure, interacts (via N-terminus) with bacterial lipopolysaccharide (LPS).

It is found in the secreted. The protein localises to the lysosome. Its subcellular location is the cytoplasmic granule. Its function is as follows. Ribonuclease which shows a preference for the pyrimidines uridine and cytosine. Has potent antibacterial activity against a range of Gram-positive and Gram-negative bacteria, including P.aeruginosa, A.baumanii, M.luteus, S.aureus, E.faecalis, E.faecium, S.saprophyticus and E.coli. Causes loss of bacterial membrane integrity, and also promotes agglutination of Gram-negative bacteria. Probably contributes to urinary tract sterility. Bactericidal activity is independent of RNase activity. In Miopithecus talapoin (Angolan talapoin), this protein is Ribonuclease K6 (RNASE6).